Consider the following 951-residue polypeptide: Protein translocase subunit SecA (951 aa).

Residues glutamine 90, glycine 108–threonine 112, and aspartate 509 each bind ATP.

Belongs to the SecA family. In terms of assembly, monomer and homodimer. Part of the essential Sec protein translocation apparatus which comprises SecA, SecYEG and auxiliary proteins SecDF. Other proteins may also be involved.

It is found in the cell inner membrane. The protein localises to the cellular thylakoid membrane. The protein resides in the cytoplasm. The catalysed reaction is ATP + H2O + cellular proteinSide 1 = ADP + phosphate + cellular proteinSide 2.. Functionally, part of the Sec protein translocase complex. Interacts with the SecYEG preprotein conducting channel. Has a central role in coupling the hydrolysis of ATP to the transfer of proteins into and across the cell membrane, serving as an ATP-driven molecular motor driving the stepwise translocation of polypeptide chains across the membrane. Probably participates in protein translocation into and across both the cytoplasmic and thylakoid membranes in cyanobacterial cells. The sequence is that of Protein translocase subunit SecA from Prochlorococcus marinus (strain MIT 9303).